Consider the following 281-residue polypeptide: Transformer-2 protein homolog alpha (281 aa).

Residues 1 to 116 (MSDVEENNFE…TGSRANPDPN (116 aa)) are disordered. Serine 2 carries the N-acetylserine modification. 2 positions are modified to phosphoserine: serine 2 and serine 14. Phosphothreonine is present on threonine 24. Residues 51–82 (RSRSKSRSRSRRHSHRRYTRSRSHSHRRRSRS) are compositionally biased toward basic residues. Residues serine 80, serine 82, and serine 84 each carry the phosphoserine modification. Threonine 86 is modified (phosphothreonine). Basic residues predominate over residues 90–108 (RRRRSRSHSPMSNRRRHTG). Serine 94 and serine 96 each carry phosphoserine. Positions 117-195 (TCLGVFGLSL…RRIRVDYSIT (79 aa)) constitute an RRM domain. A Glycyl lysine isopeptide (Lys-Gly) (interchain with G-Cter in SUMO2) cross-link involves residue lysine 196. Residues 196–223 (KRAHTPTPGIYMGRPTHSGGGGGGGGGG) form a linker region. The disordered stretch occupies residues 199–281 (HTPTPGIYMG…RSRSYSPRRY (83 aa)). A phosphothreonine mark is found at threonine 200 and threonine 202. Residues 213 to 231 (SGGGGGGGGGGGGGGGGGG) show a composition bias toward gly residues. An Omega-N-methylarginine modification is found at arginine 233. Basic and acidic residues predominate over residues 233-257 (RRRDSYYDRGYDRGYDRYEDYDYRR). Phosphoserine is present on serine 237. The segment covering 267–281 (YRSRSRSRSYSPRRY) has biased composition (basic residues).

It belongs to the splicing factor SR family. In terms of assembly, binds to A3 enhancer proteins SRp75, SRp55, SRp40 and SRp30. Interacts with ILDR1 (via C-terminus) and ILDR2. Phosphorylated in the RS domains. Expressed in inner ear.

It localises to the nucleus. Sequence-specific RNA-binding protein which participates in the control of pre-mRNA splicing. The polypeptide is Transformer-2 protein homolog alpha (Mus musculus (Mouse)).